The chain runs to 362 residues: Ribosomal RNA large subunit methyltransferase M (362 aa).

Residues S187, C220–G223, D239, D259, and D276 contribute to the S-adenosyl-L-methionine site. Catalysis depends on K305, which acts as the Proton acceptor.

The protein belongs to the class I-like SAM-binding methyltransferase superfamily. RNA methyltransferase RlmE family. RlmM subfamily. In terms of assembly, monomer.

The protein localises to the cytoplasm. It carries out the reaction cytidine(2498) in 23S rRNA + S-adenosyl-L-methionine = 2'-O-methylcytidine(2498) in 23S rRNA + S-adenosyl-L-homocysteine + H(+). Catalyzes the 2'-O-methylation at nucleotide C2498 in 23S rRNA. This Shewanella frigidimarina (strain NCIMB 400) protein is Ribosomal RNA large subunit methyltransferase M.